The sequence spans 320 residues: ATP-dependent 6-phosphofructokinase (320 aa).

Gly-12 contributes to the ATP binding site. ADP is bound by residues 22–26 (RGVVR) and 55–60 (RYSVSD). Residues 73 to 74 (RF) and 103 to 106 (GDGS) contribute to the ATP site. Asp-104 is a binding site for Mg(2+). 126-128 (TID) is a binding site for substrate. Asp-128 serves as the catalytic Proton acceptor. Residue Arg-155 participates in ADP binding. Residues Arg-163 and 170–172 (MGR) contribute to the substrate site. Residues 186-188 (GCE), Lys-212, and 214-216 (KKH) contribute to the ADP site. Substrate is bound by residues Glu-223, Arg-244, and 250–253 (HIQR).

It belongs to the phosphofructokinase type A (PFKA) family. ATP-dependent PFK group I subfamily. Prokaryotic clade 'B1' sub-subfamily. In terms of assembly, homotetramer. The cofactor is Mg(2+).

Its subcellular location is the cytoplasm. It carries out the reaction beta-D-fructose 6-phosphate + ATP = beta-D-fructose 1,6-bisphosphate + ADP + H(+). It participates in carbohydrate degradation; glycolysis; D-glyceraldehyde 3-phosphate and glycerone phosphate from D-glucose: step 3/4. Its activity is regulated as follows. Allosterically activated by ADP and other diphosphonucleosides, and allosterically inhibited by phosphoenolpyruvate. Catalyzes the phosphorylation of D-fructose 6-phosphate to fructose 1,6-bisphosphate by ATP, the first committing step of glycolysis. The chain is ATP-dependent 6-phosphofructokinase from Buchnera aphidicola subsp. Schizaphis graminum (strain Sg).